Here is a 517-residue protein sequence, read N- to C-terminus: 2,3-bisphosphoglycerate-independent phosphoglycerate mutase 1 (517 aa).

Residues Asp17 and Ser67 each coordinate Mn(2+). Residue Ser67 is the Phosphoserine intermediate of the active site. Residues His128, 158 to 159 (RD), Arg190, Arg196, 267 to 270 (RPDR), and Lys340 contribute to the substrate site. The Mn(2+) site is built by Asp407, His411, Asp448, His449, and His467.

The protein belongs to the BPG-independent phosphoglycerate mutase family. Mn(2+) is required as a cofactor.

The enzyme catalyses (2R)-2-phosphoglycerate = (2R)-3-phosphoglycerate. The protein operates within carbohydrate degradation; glycolysis; pyruvate from D-glyceraldehyde 3-phosphate: step 3/5. Functionally, catalyzes the interconversion of 2-phosphoglycerate and 3-phosphoglycerate. The chain is 2,3-bisphosphoglycerate-independent phosphoglycerate mutase 1 from Methanosarcina barkeri (strain Fusaro / DSM 804).